We begin with the raw amino-acid sequence, 84 residues long: Small ribosomal subunit protein bS20 (84 aa).

This sequence belongs to the bacterial ribosomal protein bS20 family.

In terms of biological role, binds directly to 16S ribosomal RNA. This Levilactobacillus brevis (strain ATCC 367 / BCRC 12310 / CIP 105137 / JCM 1170 / LMG 11437 / NCIMB 947 / NCTC 947) (Lactobacillus brevis) protein is Small ribosomal subunit protein bS20.